Reading from the N-terminus, the 525-residue chain is GMP synthase [glutamine-hydrolyzing] (525 aa).

Positions 8–207 (KILILDFGSQ…ALDICQCEAN (200 aa)) constitute a Glutamine amidotransferase type-1 domain. C85 (nucleophile) is an active-site residue. Residues H181 and E183 contribute to the active site. The GMPS ATP-PPase domain occupies 208–400 (WKPSSIIEDA…LGLPYNMLYR (193 aa)). ATP is bound at residue 235 to 241 (SGGVDSS).

In terms of assembly, homodimer.

It carries out the reaction XMP + L-glutamine + ATP + H2O = GMP + L-glutamate + AMP + diphosphate + 2 H(+). The protein operates within purine metabolism; GMP biosynthesis; GMP from XMP (L-Gln route): step 1/1. Its function is as follows. Catalyzes the synthesis of GMP from XMP. This Shewanella loihica (strain ATCC BAA-1088 / PV-4) protein is GMP synthase [glutamine-hydrolyzing].